We begin with the raw amino-acid sequence, 393 residues long: Phosphopentomutase (393 aa).

Positions 15, 288, 293, 329, 330, and 341 each coordinate Mn(2+).

This sequence belongs to the phosphopentomutase family. Requires Mn(2+) as cofactor.

It localises to the cytoplasm. It catalyses the reaction 2-deoxy-alpha-D-ribose 1-phosphate = 2-deoxy-D-ribose 5-phosphate. The catalysed reaction is alpha-D-ribose 1-phosphate = D-ribose 5-phosphate. Its pathway is carbohydrate degradation; 2-deoxy-D-ribose 1-phosphate degradation; D-glyceraldehyde 3-phosphate and acetaldehyde from 2-deoxy-alpha-D-ribose 1-phosphate: step 1/2. Isomerase that catalyzes the conversion of deoxy-ribose 1-phosphate (dRib-1-P) and ribose 1-phosphate (Rib-1-P) to deoxy-ribose 5-phosphate (dRib-5-P) and ribose 5-phosphate (Rib-5-P), respectively. This Halalkalibacterium halodurans (strain ATCC BAA-125 / DSM 18197 / FERM 7344 / JCM 9153 / C-125) (Bacillus halodurans) protein is Phosphopentomutase.